A 592-amino-acid polypeptide reads, in one-letter code: MRCLALSAVFLCLTLAGHFHLSDAYKNEVQITPDPLDAVETTTKKSSWFGGFKKFFGSDGTTTTTSTIAPPVVTSPKSVVVTPTAANKPPPLVISHAPLMPLGPRPDTPGSSPFGASQNPQTPPQWPSSTRATPSHPSQPSQPSQQPPLPGFASYRPQKPQPNSYDLSYGGGPQPAPAGTGRPGFGLGISSTTSTTTTAKPITSTTGKTPQQKEDFPALPGPRRPSQKEDFPALPAPKTPPGSPTPTPGSPSAWQSPLPTPQHPVHPPTKATSAATPTPTPTPSFSSSVTPTPAHGSSVGPHKDGGGGGGGGTTTVRPGFQSSGNSVATDDEIRQLTELLYTKESNSQIGNIQVNLQGRTRSIDSADEAPNPLLTVDSKALESPTIVKMRLLFNNYEHDTHVNEHVTPNERKEENDFLDAVMATPVMRQAMLFLQQKGVVSPDPKTHRDLVKELWFTQYSRGQGKIGSSGFEHVFVYEVKDGTIIGFHNWVYIGDEEKDGRFDYKGYMKEQDIGTKGKIVKIRFSHQGLNKPVNTVFVGTSPELELALYTVCFQLRPDRTCPVSLGNSKFGIVTYSWRYRGKNLIGSAYPEI.

The N-terminal stretch at 1-24 (MRCLALSAVFLCLTLAGHFHLSDA) is a signal peptide. The interval 83–329 (PTAANKPPPL…FQSSGNSVAT (247 aa)) is disordered. Polar residues predominate over residues 109–120 (PGSSPFGASQNP). 2 stretches are compositionally biased toward low complexity: residues 134–144 (PSHPSQPSQPS) and 188–209 (GISS…TGKT). Composition is skewed to pro residues over residues 234-249 (LPAP…PTPG) and 258-267 (LPTPQHPVHP). Low complexity predominate over residues 268-294 (PTKATSAATPTPTPTPSFSSSVTPTPA). In terms of domain architecture, EndoU spans 329 to 592 (TDDEIRQLTE…NLIGSAYPEI (264 aa)). Catalysis depends on residues His-473, His-488, and Lys-531.

This sequence belongs to the ENDOU family. In terms of assembly, monomer. Mn(2+) serves as cofactor. In terms of tissue distribution, predominantly expressed in head. Expressed in fat body cells.

It is found in the endoplasmic reticulum lumen. The protein resides in the secreted. The catalysed reaction is a ribonucleotidyl-ribonucleotide-RNA + H2O = a 3'-end 3'-phospho-ribonucleotide-RNA + a 5'-end dephospho-ribonucleoside-RNA + H(+). In terms of biological role, endoribonuclease that cleaves single-stranded RNAs; unlike its paralog EndoU it does not appear to preferentially cleave at uridylates and releases linear products instead of products that have 2'-3'-cyclic phosphate termini. Preferentially cleaves single stranded RNA at sites with AU, UC and poly-U sites cleaved less efficiently. Targets mRNAs encoding proteins involved in lipid metabolism, particularly those involved in lipolysis, to regulate their expression. The sequence is that of Endoribonuclease Arlr from Drosophila melanogaster (Fruit fly).